The following is a 244-amino-acid chain: 1-(5-phosphoribosyl)-5-[(5-phosphoribosylamino)methylideneamino] imidazole-4-carboxamide isomerase (244 aa).

The active-site Proton acceptor is the D9. The Proton donor role is filled by D131.

It belongs to the HisA/HisF family.

The protein localises to the cytoplasm. It carries out the reaction 1-(5-phospho-beta-D-ribosyl)-5-[(5-phospho-beta-D-ribosylamino)methylideneamino]imidazole-4-carboxamide = 5-[(5-phospho-1-deoxy-D-ribulos-1-ylimino)methylamino]-1-(5-phospho-beta-D-ribosyl)imidazole-4-carboxamide. The protein operates within amino-acid biosynthesis; L-histidine biosynthesis; L-histidine from 5-phospho-alpha-D-ribose 1-diphosphate: step 4/9. This Campylobacter jejuni subsp. doylei (strain ATCC BAA-1458 / RM4099 / 269.97) protein is 1-(5-phosphoribosyl)-5-[(5-phosphoribosylamino)methylideneamino] imidazole-4-carboxamide isomerase.